Consider the following 118-residue polypeptide: Small ribosomal subunit protein uS13 (118 aa).

Positions 91–118 (HRRGLPVRGQRTKTNARTRKGPRKPIKK) are disordered.

It belongs to the universal ribosomal protein uS13 family. Part of the 30S ribosomal subunit. Forms a loose heterodimer with protein S19. Forms two bridges to the 50S subunit in the 70S ribosome.

Located at the top of the head of the 30S subunit, it contacts several helices of the 16S rRNA. In the 70S ribosome it contacts the 23S rRNA (bridge B1a) and protein L5 of the 50S subunit (bridge B1b), connecting the 2 subunits; these bridges are implicated in subunit movement. Contacts the tRNAs in the A and P-sites. This is Small ribosomal subunit protein uS13 from Sodalis glossinidius (strain morsitans).